Consider the following 479-residue polypeptide: Flap endonuclease 1 (479 aa).

Residues 1-106 (MGIKGLTKFI…SELEKRGEKR (106 aa)) form an N-domain region. Aspartate 34 provides a ligand contact to Mg(2+). 2 residues coordinate DNA: arginine 47 and arginine 72. Mg(2+) is bound by residues aspartate 88, glutamate 160, glutamate 162, aspartate 181, and aspartate 183. The I-domain stretch occupies residues 124–266 (EIKKQSGRTV…KTAYNLIKEY (143 aa)). DNA is bound at residue glutamate 160. Residues glycine 244 and aspartate 246 each coordinate DNA. Aspartate 246 contributes to the Mg(2+) binding site. Residues 349–357 (TQRRLDTFF) form an interaction with PCNA region. Residues 379–455 (AKGKGKKREL…NSDSGNIKNE (77 aa)) are disordered. Residues 403 to 428 (NIKDEKKNTDKMDELKNKSDENFVKD) show a composition bias toward basic and acidic residues.

It belongs to the XPG/RAD2 endonuclease family. FEN1 subfamily. Interacts with PCNA. Three molecules of FEN1 bind to one PCNA trimer with each molecule binding to one PCNA monomer. PCNA stimulates the nuclease activity without altering cleavage specificity. The cofactor is Mg(2+). Phosphorylated. Phosphorylation upon DNA damage induces relocalization to the nuclear plasma.

Its subcellular location is the nucleus. It is found in the nucleolus. The protein localises to the nucleoplasm. The protein resides in the mitochondrion. In terms of biological role, structure-specific nuclease with 5'-flap endonuclease and 5'-3' exonuclease activities involved in DNA replication and repair. During DNA replication, cleaves the 5'-overhanging flap structure that is generated by displacement synthesis when DNA polymerase encounters the 5'-end of a downstream Okazaki fragment. It enters the flap from the 5'-end and then tracks to cleave the flap base, leaving a nick for ligation. Also involved in the long patch base excision repair (LP-BER) pathway, by cleaving within the apurinic/apyrimidinic (AP) site-terminated flap. Acts as a genome stabilization factor that prevents flaps from equilibrating into structures that lead to duplications and deletions. Also possesses 5'-3' exonuclease activity on nicked or gapped double-stranded DNA, and exhibits RNase H activity. Also involved in replication and repair of rDNA and in repairing mitochondrial DNA. The polypeptide is Flap endonuclease 1 (Plasmodium chabaudi chabaudi).